The sequence spans 105 residues: UPF0145 protein HD_1349 (105 aa).

It belongs to the UPF0145 family.

In Haemophilus ducreyi (strain 35000HP / ATCC 700724), this protein is UPF0145 protein HD_1349.